The chain runs to 269 residues: Dermonecrotic toxin SpeSicTox-betaIB3 (269 aa).

Histidine 5 is a catalytic residue. The Mg(2+) site is built by glutamate 25 and aspartate 27. The Nucleophile role is filled by histidine 41. Cystine bridges form between cysteine 45/cysteine 51 and cysteine 47/cysteine 191. Aspartate 85 is a binding site for Mg(2+).

This sequence belongs to the arthropod phospholipase D family. Class II subfamily. The cofactor is Mg(2+). As to expression, expressed by the venom gland.

It localises to the secreted. The catalysed reaction is an N-(acyl)-sphingosylphosphocholine = an N-(acyl)-sphingosyl-1,3-cyclic phosphate + choline. The enzyme catalyses an N-(acyl)-sphingosylphosphoethanolamine = an N-(acyl)-sphingosyl-1,3-cyclic phosphate + ethanolamine. It carries out the reaction a 1-acyl-sn-glycero-3-phosphocholine = a 1-acyl-sn-glycero-2,3-cyclic phosphate + choline. It catalyses the reaction a 1-acyl-sn-glycero-3-phosphoethanolamine = a 1-acyl-sn-glycero-2,3-cyclic phosphate + ethanolamine. Its function is as follows. Dermonecrotic toxins cleave the phosphodiester linkage between the phosphate and headgroup of certain phospholipids (sphingolipid and lysolipid substrates), forming an alcohol (often choline) and a cyclic phosphate. This toxin acts on sphingomyelin (SM). It may also act on ceramide phosphoethanolamine (CPE), lysophosphatidylcholine (LPC) and lysophosphatidylethanolamine (LPE), but not on lysophosphatidylserine (LPS), and lysophosphatidylglycerol (LPG). It acts by transphosphatidylation, releasing exclusively cyclic phosphate products as second products. Induces dermonecrosis, hemolysis, increased vascular permeability, edema, inflammatory response, and platelet aggregation. The chain is Dermonecrotic toxin SpeSicTox-betaIB3 from Sicarius peruensis (Six-eyed sand spider).